The following is a 98-amino-acid chain: DNA-directed RNA polymerase subunit omega (98 aa).

It belongs to the RNA polymerase subunit omega family. As to quaternary structure, the RNAP catalytic core consists of 2 alpha, 1 beta, 1 beta' and 1 omega subunit. When a sigma factor is associated with the core the holoenzyme is formed, which can initiate transcription.

The catalysed reaction is RNA(n) + a ribonucleoside 5'-triphosphate = RNA(n+1) + diphosphate. Its function is as follows. Promotes RNA polymerase assembly. Latches the N- and C-terminal regions of the beta' subunit thereby facilitating its interaction with the beta and alpha subunits. The chain is DNA-directed RNA polymerase subunit omega from Tropheryma whipplei (strain Twist) (Whipple's bacillus).